The primary structure comprises 103 residues: Large ribosomal subunit protein bL21 (103 aa).

Belongs to the bacterial ribosomal protein bL21 family. In terms of assembly, part of the 50S ribosomal subunit. Contacts protein L20.

Its function is as follows. This protein binds to 23S rRNA in the presence of protein L20. This is Large ribosomal subunit protein bL21 from Nautilia profundicola (strain ATCC BAA-1463 / DSM 18972 / AmH).